A 113-amino-acid polypeptide reads, in one-letter code: Large ribosomal subunit protein bL19 (113 aa).

This sequence belongs to the bacterial ribosomal protein bL19 family.

Functionally, this protein is located at the 30S-50S ribosomal subunit interface and may play a role in the structure and function of the aminoacyl-tRNA binding site. The sequence is that of Large ribosomal subunit protein bL19 from Carboxydothermus hydrogenoformans (strain ATCC BAA-161 / DSM 6008 / Z-2901).